A 451-amino-acid chain; its full sequence is Phosphoglucosamine mutase (451 aa).

Residue Ser-101 is the Phosphoserine intermediate of the active site. 4 residues coordinate Mg(2+): Ser-101, Asp-240, Asp-242, and Asp-244. At Ser-101 the chain carries Phosphoserine.

Belongs to the phosphohexose mutase family. It depends on Mg(2+) as a cofactor. Activated by phosphorylation.

It carries out the reaction alpha-D-glucosamine 1-phosphate = D-glucosamine 6-phosphate. Catalyzes the conversion of glucosamine-6-phosphate to glucosamine-1-phosphate. The chain is Phosphoglucosamine mutase from Streptococcus pyogenes serotype M18 (strain MGAS8232).